Consider the following 988-residue polypeptide: Transcription regulator srbA precursor (988 aa).

Over methionine 1–histidine 427 the chain is Cytoplasmic. Disordered stretches follow at residues alanine 53–methionine 85 and glycine 108–alanine 169. Residues serine 125–serine 136 are compositionally biased toward low complexity. The basic motif stretch occupies residues serine 165–arginine 178. The bHLH domain occupies serine 165 to leucine 236. The interval alanine 179 to leucine 236 is helix-loop-helix motif. The stretch at leucine 226–alanine 260 forms a coiled coil. The span at serine 267–valine 291 shows a compositional bias: polar residues. A disordered region spans residues serine 267–leucine 313. A compositionally biased stretch (low complexity) spans aspartate 301 to proline 310. The helical transmembrane segment at phenylalanine 428–phenylalanine 447 threads the bilayer. Residues asparagine 448 to serine 988 lie on the Lumenal side of the membrane. Low complexity predominate over residues proline 866–serine 881. The disordered stretch occupies residues proline 866 to methionine 900.

In low oxygen or sterol conditions, undergoes proteolytic cleavage by rhomboid-type protease rbdB and is released as soluble transcription factor from the membrane.

It is found in the endoplasmic reticulum membrane. The protein localises to the nucleus. Its function is as follows. Precursor of the transcription factor srbA, which is embedded in the endoplasmic reticulum membrane. Low oxygen or sterol conditions promote processing of this form, releasing the transcription factor form that translocates into the nucleus and activates transcription of genes required for adaptation to anaerobic growth. In terms of biological role, transcription factor that regulates sterol biosynthesis and hyphal morphology. Plays a critical role in ergosterol biosynthesis, resistance to the azole class of antifungal drugs, and in maintenance of cell polarity. Directly binds erg11A/cyp51A upstream DNA sequence at tandem repeats, called TR34 and TR46, that produce duplicated binding sites. Also mediates regulation of iron acquisition in response to hypoxia and low iron conditions via activation of extra- and intracellular siderophore production. Positively regulates the expression of the other hypoxia adaptation key transcription factor srbB. Required for the azole-sensing and response to azole stress. Binds the high-affinity sites 5'-A-T-C-G/A-T/G-A/G-C/T-G/C-A-T-3' of target promoters. Required for virulence in murine models of invasive pulmonary aspergillosis (IPA). The sequence is that of Transcription regulator srbA precursor from Aspergillus fumigatus (strain ATCC MYA-4609 / CBS 101355 / FGSC A1100 / Af293) (Neosartorya fumigata).